The sequence spans 302 residues: Aspartate carbamoyltransferase catalytic subunit (302 aa).

Carbamoyl phosphate is bound by residues Arg-53 and Thr-54. Lys-82 is an L-aspartate binding site. Residues Arg-103, His-131, and Gln-134 each contribute to the carbamoyl phosphate site. 2 residues coordinate L-aspartate: Arg-164 and Arg-223. Positions 260 and 261 each coordinate carbamoyl phosphate.

This sequence belongs to the aspartate/ornithine carbamoyltransferase superfamily. ATCase family. As to quaternary structure, heterooligomer of catalytic and regulatory chains.

The catalysed reaction is carbamoyl phosphate + L-aspartate = N-carbamoyl-L-aspartate + phosphate + H(+). Its pathway is pyrimidine metabolism; UMP biosynthesis via de novo pathway; (S)-dihydroorotate from bicarbonate: step 2/3. Catalyzes the condensation of carbamoyl phosphate and aspartate to form carbamoyl aspartate and inorganic phosphate, the committed step in the de novo pyrimidine nucleotide biosynthesis pathway. This is Aspartate carbamoyltransferase catalytic subunit from Methanococcus maripaludis (strain C6 / ATCC BAA-1332).